The primary structure comprises 142 residues: Hemoglobin subunit alpha (142 aa).

One can recognise a Globin domain in the interval valine 2 to arginine 142. Serine 4 is subject to Phosphoserine. N6-succinyllysine is present on residues lysine 8 and lysine 12. An N6-acetyllysine; alternate modification is found at lysine 17. Lysine 17 bears the N6-succinyllysine; alternate mark. Tyrosine 25 carries the phosphotyrosine modification. Serine 36 carries the post-translational modification Phosphoserine. Position 41 is an N6-succinyllysine (lysine 41). A Phosphoserine modification is found at serine 50. Position 59 (histidine 59) interacts with O2. Histidine 88 contacts heme b. Serine 103 bears the Phosphoserine mark. Phosphothreonine is present on threonine 109. A phosphoserine mark is found at serine 125 and serine 132. Phosphothreonine occurs at positions 135 and 138. The residue at position 139 (serine 139) is a Phosphoserine.

This sequence belongs to the globin family. Heterotetramer of two alpha chains and two beta chains. In terms of tissue distribution, red blood cells.

In terms of biological role, involved in oxygen transport from the lung to the various peripheral tissues. Functionally, hemopressin acts as an antagonist peptide of the cannabinoid receptor CNR1. Hemopressin-binding efficiently blocks cannabinoid receptor CNR1 and subsequent signaling. In Pantholops hodgsonii (Chiru), this protein is Hemoglobin subunit alpha (HBA).